We begin with the raw amino-acid sequence, 181 residues long: Protein GrpE (181 aa).

The segment covering 1–13 has biased composition (polar residues); that stretch reads MENTQENPATQSA. The disordered stretch occupies residues 1–34; it reads MENTQENPATQSAEDIGSAKQAAQGAAPAAEAAD. Over residues 19–34 the composition is skewed to low complexity; it reads AKQAAQGAAPAAEAAD.

The protein belongs to the GrpE family. As to quaternary structure, homodimer.

It is found in the cytoplasm. In terms of biological role, participates actively in the response to hyperosmotic and heat shock by preventing the aggregation of stress-denatured proteins, in association with DnaK and GrpE. It is the nucleotide exchange factor for DnaK and may function as a thermosensor. Unfolded proteins bind initially to DnaJ; upon interaction with the DnaJ-bound protein, DnaK hydrolyzes its bound ATP, resulting in the formation of a stable complex. GrpE releases ADP from DnaK; ATP binding to DnaK triggers the release of the substrate protein, thus completing the reaction cycle. Several rounds of ATP-dependent interactions between DnaJ, DnaK and GrpE are required for fully efficient folding. The protein is Protein GrpE of Burkholderia vietnamiensis (strain G4 / LMG 22486) (Burkholderia cepacia (strain R1808)).